The chain runs to 91 residues: Alpha-defensin-related sequence 2 (91 aa).

The first 19 residues, 1–19 (MKKLVLLFALVLLAFQVQA), serve as a signal peptide directing secretion. Residues 20–58 (DSIQNTDEETKTEEQPGEKDQAVSVSFGDPQGSALQDAA) constitute a propeptide that is removed on maturation. The segment at 22-48 (IQNTDEETKTEEQPGEKDQAVSVSFGD) is disordered. Residues 27 to 40 (EETKTEEQPGEKDQ) show a composition bias toward basic and acidic residues. A run of 7 repeats spans residues 65–67 (CPQ), 68–70 (CPR), 71–73 (CPS), 74–76 (CPS), 77–79 (CPR), 80–82 (CPR), and 83–85 (CPR). The tract at residues 65–85 (CPQCPRCPSCPSCPRCPRCPR) is 7 X 3 AA tandem repeats of C-P-X.

It belongs to the alpha-defensin family. As to expression, small bowel, spleen, colon, kidney, liver, stomach and femur marrow.

The protein localises to the secreted. In terms of biological role, apparent precursor of a secreted, cationic, proline- and cysteine-rich peptide that contains Cys-Pro-Xaa repeats. Unlike cryptdin, the proposed mature peptide region lacks the structural motif characteristic of defensins. It may have microbicidal activities. This chain is Alpha-defensin-related sequence 2 (Defa-rs2), found in Mus musculus (Mouse).